Consider the following 92-residue polypeptide: C-C motif chemokine 4 (92 aa).

The first 23 residues, 1–23, serve as a signal peptide directing secretion; the sequence is MKLCVTVLSLLVLVAAFCSPALS. 2 cysteine pairs are disulfide-bonded: C34/C58 and C35/C74.

It belongs to the intercrine beta (chemokine CC) family. As to quaternary structure, homodimer. Interacts with CCR5.

The protein resides in the secreted. Monokine with inflammatory and chemokinetic properties. The chain is C-C motif chemokine 4 (CCL4) from Sus scrofa (Pig).